The chain runs to 462 residues: Cell wall mannoprotein 1 (462 aa).

The N-terminal stretch at 1–18 (MKFLSSLVVLGLSAQALA) is a signal peptide. Serine 313 contributes to the hexadecanoate binding site. Positions 346–429 (FAGTGPAPTT…SVPAAPTGGN (84 aa)) are disordered. Positions 347-366 (AGTGPAPTTSSTPEASTAPA) are enriched in low complexity. Residues 399–420 (VWPTSTTASPDVQPTITSSGTS) are compositionally biased toward polar residues.

It belongs to the cell wall mannoprotein 1 family. As to quaternary structure, monomer. Mannoprotein, glycosylated.

The protein resides in the secreted. It is found in the cell wall. Functionally, constitutive protein of the cell wall. Binds fatty acids and may thus serve as a fatty acid transporter between P.marneffei and host cells during infection. Abundant antigen target of host humoral immune response. The polypeptide is Cell wall mannoprotein 1 (Talaromyces marneffei (Penicillium marneffei)).